The sequence spans 368 residues: CST complex subunit STN1 (368 aa).

Residues 1 to 185 form an interaction with CTC1 region; the sequence is MQPGSSRCEE…KVYDQPFHSS (185 aa). The OB DNA-binding region spans 57–155; the sequence is VDVLGTVIGV…EIHATTYYKV (99 aa). 2 winged helix-turn-helix (wHTH) regions span residues 191–295 and 296–368; these read EALS…YVTR and EDKD…YTAF.

Belongs to the STN1 family. As to quaternary structure, component of the CST complex, composed of TEN1/C17orf106, CTC1/C17orf68 and STN1; in the complex interacts directly with TEN1 and CTC1. Interacts with ACD/TPP1, POT1 and POLA1.

Its subcellular location is the nucleus. It is found in the chromosome. It localises to the telomere. In terms of biological role, component of the CST complex proposed to act as a specialized replication factor promoting DNA replication under conditions of replication stress or natural replication barriers such as the telomere duplex. The CST complex binds single-stranded DNA with high affinity in a sequence-independent manner, while isolated subunits bind DNA with low affinity by themselves. Initially the CST complex has been proposed to protect telomeres from DNA degradation. However, the CST complex has been shown to be involved in several aspects of telomere replication. The CST complex inhibits telomerase and is involved in telomere length homeostasis; it is proposed to bind to newly telomerase-synthesized 3' overhangs and to terminate telomerase action implicating the association with the ACD:POT1 complex thus interfering with its telomerase stimulation activity. The CST complex is also proposed to be involved in fill-in synthesis of the telomeric C-strand probably implicating recruitment and activation of DNA polymerase alpha. The CST complex facilitates recovery from many forms of exogenous DNA damage; seems to be involved in the re-initiation of DNA replication at repaired forks and/or dormant origins. Required for efficicient replication of the duplex region of the telomere. Promotes efficient replication of lagging-strand telomeres. Promotes general replication start following replication-fork stalling implicating new origin firing. May be in involved in C-strand fill-in during late S/G2 phase independent of its role in telomere duplex replication. Component of the CST complex, a complex that binds to single-stranded DNA and is required to protect telomeres from DNA degradation. The CST complex binds single-stranded DNA with high affinity in a sequence-independent manner, while isolated subunits bind DNA with low affinity by themselves. In addition to telomere protection, the CST complex has probably a more general role in DNA metabolism at non-telomeric sites. The protein is CST complex subunit STN1 of Homo sapiens (Human).